The chain runs to 288 residues: Acetyl-coenzyme A carboxylase carboxyl transferase subunit beta (288 aa).

The CoA carboxyltransferase N-terminal domain maps to 34–288 (LFAKCPACKH…HLVSFHGGGQ (255 aa)). Zn(2+) contacts are provided by Cys-38, Cys-41, Cys-56, and Cys-59. A C4-type zinc finger spans residues 38–59 (CPACKHMIYKKDLGLAKICPTC).

It belongs to the AccD/PCCB family. In terms of assembly, acetyl-CoA carboxylase is a heterohexamer composed of biotin carboxyl carrier protein (AccB), biotin carboxylase (AccC) and two subunits each of ACCase subunit alpha (AccA) and ACCase subunit beta (AccD). It depends on Zn(2+) as a cofactor.

Its subcellular location is the cytoplasm. It catalyses the reaction N(6)-carboxybiotinyl-L-lysyl-[protein] + acetyl-CoA = N(6)-biotinyl-L-lysyl-[protein] + malonyl-CoA. It functions in the pathway lipid metabolism; malonyl-CoA biosynthesis; malonyl-CoA from acetyl-CoA: step 1/1. Component of the acetyl coenzyme A carboxylase (ACC) complex. Biotin carboxylase (BC) catalyzes the carboxylation of biotin on its carrier protein (BCCP) and then the CO(2) group is transferred by the transcarboxylase to acetyl-CoA to form malonyl-CoA. The sequence is that of Acetyl-coenzyme A carboxylase carboxyl transferase subunit beta from Streptococcus pyogenes serotype M49 (strain NZ131).